We begin with the raw amino-acid sequence, 248 residues long: Large ribosomal subunit protein uL4 (248 aa).

Disordered stretches follow at residues 48–96 (GTHK…PVPR) and 210–248 (AFSE…RTGA). Residues 233–248 (DATKARSSRHDDRTGA) are compositionally biased toward basic and acidic residues.

Belongs to the universal ribosomal protein uL4 family. Part of the 50S ribosomal subunit.

One of the primary rRNA binding proteins, this protein initially binds near the 5'-end of the 23S rRNA. It is important during the early stages of 50S assembly. It makes multiple contacts with different domains of the 23S rRNA in the assembled 50S subunit and ribosome. Functionally, forms part of the polypeptide exit tunnel. This Tropheryma whipplei (strain Twist) (Whipple's bacillus) protein is Large ribosomal subunit protein uL4.